A 427-amino-acid chain; its full sequence is UPF0229 protein YeaH (427 aa).

A compositionally biased stretch (basic and acidic residues) spans 79-90; that stretch reads NDHFVQNDRIER. Positions 79–110 are disordered; the sequence is NDHFVQNDRIERPQGGGGGSGSGQGQASQDGE. Over residues 92 to 102 the composition is skewed to gly residues; it reads QGGGGGSGSGQ.

It belongs to the UPF0229 family.

This chain is UPF0229 protein YeaH, found in Escherichia coli O127:H6 (strain E2348/69 / EPEC).